The following is a 105-amino-acid chain: U7-hexatoxin-Hi1a (105 aa).

A signal peptide spans 1–23; it reads MKTILLFLGVCAVGASMMTGGWT.

Belongs to the cystatin family. Contains 2 disulfide bonds. In terms of tissue distribution, expressed by the venom gland.

Its subcellular location is the secreted. In terms of biological role, inhibits various C1 cysteine proteases. This protein has no toxic activity and its function in the venom is unknown. It may play a role as a housekeeping or regulatory protein. The chain is U7-hexatoxin-Hi1a from Hadronyche infensa (Fraser island funnel-web spider).